Here is a 194-residue protein sequence, read N- to C-terminus: Holliday junction branch migration complex subunit RuvA (194 aa).

Positions 1-64 (MIGRLRGILA…EDSVSLYGFL (64 aa)) are domain I. Residues 65–140 (REGERRLFRD…RAADFSSGAP (76 aa)) are domain II. Residues 140–144 (PITGQ) form a flexible linker region. The segment at 145–194 (LGPDAISEATVALQQLGYKPAEAARMARDAGAEGGEVATVIRKALQAALR) is domain III.

Belongs to the RuvA family. In terms of assembly, homotetramer. Forms an RuvA(8)-RuvB(12)-Holliday junction (HJ) complex. HJ DNA is sandwiched between 2 RuvA tetramers; dsDNA enters through RuvA and exits via RuvB. An RuvB hexamer assembles on each DNA strand where it exits the tetramer. Each RuvB hexamer is contacted by two RuvA subunits (via domain III) on 2 adjacent RuvB subunits; this complex drives branch migration. In the full resolvosome a probable DNA-RuvA(4)-RuvB(12)-RuvC(2) complex forms which resolves the HJ.

The protein resides in the cytoplasm. The RuvA-RuvB-RuvC complex processes Holliday junction (HJ) DNA during genetic recombination and DNA repair, while the RuvA-RuvB complex plays an important role in the rescue of blocked DNA replication forks via replication fork reversal (RFR). RuvA specifically binds to HJ cruciform DNA, conferring on it an open structure. The RuvB hexamer acts as an ATP-dependent pump, pulling dsDNA into and through the RuvAB complex. HJ branch migration allows RuvC to scan DNA until it finds its consensus sequence, where it cleaves and resolves the cruciform DNA. The protein is Holliday junction branch migration complex subunit RuvA of Xanthomonas oryzae pv. oryzae (strain MAFF 311018).